Reading from the N-terminus, the 338-residue chain is MRVLGIETSCDETGIAVYDDKKGLLSHALYSQVKLHADYGGVVPELASRDHVRKIVPLIRQALADAGMTIEDIDGIAYTKGPGLIGALLVGACVGRALAFSWDKPAIGVHHMEGHLLAPMLEDDVPEFPFLALLVSGGHSMIVGVEGIGRYTVLGESVDDAAGEAFDKTAKLMGLDYPGGPRLSKLAAKGVPNSYRFPRPMTDKPGLNMSFSGLKTFAANTIAAEPKDEQTRANIACAFEEAVVDTLAIKCKRALKQTGYKNLVIAGGVSANTRLRSSLAEMMQGLGGKVYYPRGEFCTDNGAMIAYAGLQRLKAGQVEGLEVKGQPRWPLDTLEPVD.

The Fe cation site is built by histidine 111 and histidine 115. Residues 134 to 138, aspartate 167, glycine 180, and asparagine 272 contribute to the substrate site; that span reads LVSGG. Position 300 (aspartate 300) interacts with Fe cation.

Belongs to the KAE1 / TsaD family. Fe(2+) is required as a cofactor.

The protein resides in the cytoplasm. The catalysed reaction is L-threonylcarbamoyladenylate + adenosine(37) in tRNA = N(6)-L-threonylcarbamoyladenosine(37) in tRNA + AMP + H(+). Functionally, required for the formation of a threonylcarbamoyl group on adenosine at position 37 (t(6)A37) in tRNAs that read codons beginning with adenine. Is involved in the transfer of the threonylcarbamoyl moiety of threonylcarbamoyl-AMP (TC-AMP) to the N6 group of A37, together with TsaE and TsaB. TsaD likely plays a direct catalytic role in this reaction. The chain is tRNA N6-adenosine threonylcarbamoyltransferase from Shewanella pealeana (strain ATCC 700345 / ANG-SQ1).